The following is a 1156-amino-acid chain: Nuclear pore-associated protein 1 (1156 aa).

Disordered regions lie at residues 1 to 60 (MGNL…RRPS), 155 to 204 (EGPR…FRCS), 219 to 266 (NSMS…PEPA), 481 to 515 (GGSYNSVVGAAPLTSDPPTPPSSTPSFKPPVTRES), 680 to 703 (TLVNSASTASSSKPPIETNAMHTT), 732 to 786 (NTQP…KTSL), 872 to 915 (STSF…SSFI), and 1026 to 1046 (APGPSSTSGELNIGQGQSGTP). Basic residues predominate over residues 50 to 59 (LFRRNARRRP). Basic and acidic residues predominate over residues 156–165 (GPRRVKKDED). Composition is skewed to polar residues over residues 179–197 (PLSSGEASSTSRSQGTQGD) and 219–231 (NSMSEKAQASPAS). Polar residues-rich tracts occupy residues 680-692 (TLVNSASTASSSK), 732-750 (NTQPSGNTASVQGSTSLPA), 884-915 (TTTSSHPLNTGSISHSTLGATDGQQKSDSSFI), and 1028-1046 (GPSSTSGELNIGQGQSGTP).

As to quaternary structure, associates with the nuclear pore complex (NPC). In terms of tissue distribution, testis-specific in adults. In fetal brain expressed only from the paternal allele.

It localises to the nucleus. It is found in the nucleoplasm. The protein localises to the nucleus inner membrane. In terms of biological role, may be involved in spermatogenesis. This is Nuclear pore-associated protein 1 (NPAP1) from Homo sapiens (Human).